A 222-amino-acid polypeptide reads, in one-letter code: UPF0502 protein Lcho_2066 (222 aa).

It belongs to the UPF0502 family.

The polypeptide is UPF0502 protein Lcho_2066 (Leptothrix cholodnii (strain ATCC 51168 / LMG 8142 / SP-6) (Leptothrix discophora (strain SP-6))).